Consider the following 129-residue polypeptide: UPF0102 protein Mnod_0024 (129 aa).

The protein belongs to the UPF0102 family.

This chain is UPF0102 protein Mnod_0024, found in Methylobacterium nodulans (strain LMG 21967 / CNCM I-2342 / ORS 2060).